The primary structure comprises 744 residues: Catalase-peroxidase (744 aa).

The segment at 1-21 (MANESKCPFHQTAGGGTSNRD) is disordered. The segment at residues 91–241 (WHSAGTYRIG…LAAVQMGLIY (151 aa)) is a cross-link (tryptophyl-tyrosyl-methioninium (Trp-Tyr) (with M-267)). The active-site Proton acceptor is the His-92. The tryptophyl-tyrosyl-methioninium (Tyr-Met) (with W-91) cross-link spans 241–267 (YVNPEGPEGNPDPVASGKDIRDTFGRM). A heme b-binding site is contributed by His-282. A disordered region spans residues 361–387 (GAHQWRPKDGKGANTVPDAHDTTKRHA).

It belongs to the peroxidase family. Peroxidase/catalase subfamily. In terms of assembly, homodimer or homotetramer. Requires heme b as cofactor. Formation of the three residue Trp-Tyr-Met cross-link is important for the catalase, but not the peroxidase activity of the enzyme.

It catalyses the reaction H2O2 + AH2 = A + 2 H2O. The enzyme catalyses 2 H2O2 = O2 + 2 H2O. Its function is as follows. Bifunctional enzyme with both catalase and broad-spectrum peroxidase activity. This Pseudomonas entomophila (strain L48) protein is Catalase-peroxidase.